The following is a 963-amino-acid chain: MATAAETSASEPEAESKAGPKADGEEDEVKAARTRRKVLSRAVAAATYKTMGPAWDQQEEGVSESDGDEYAMASSAESSPGEYEWEYDEEEEKNQLEIERLEEQLSINVYDYNCHVDLIRLLRLEGELTKVRMARQKMSEIFPLTEELWLEWLHDEISMAQDGLDREHVYDLFEKAVKDYICPNIWLEYGQYSVGGIGQKGGLEKVRSVFERALSSVGLHMTKGLALWEAYREFESAIVEAARLEKVHSLFRRQLAIPLYDMEATFAEYEEWSEDPIPESVIQNYNKALQQLEKYKPYEEALLQAEAPRLAEYQAYIDFEMKIGDPARIQLIFERALVENCLVPDLWIRYSQYLDRQLKVKDLVLSVHNRAIRNCPWTVALWSRYLLAMERHGVDHQVISVTFEKALNAGFIQATDYVEIWQAYLDYLRRRVDFKQDSSKELEELRAAFTRALEYLKQEVEERFNESGDPSCVIMQNWARIEARLCNNMQKARELWDSIMTRGNAKYANMWLEYYNLERAHGDTQHCRKALHRAVQCTSDYPEHVCEVLLTMERTEGSLEDWDIAVQKTETRLARVNEQRMKAAEKEAALVQQEEEKAEQRKRARAEKKALKKKKKIRGPEKRGADEDDEKEWGDDEEEQPSKRRRVENSIPAAGETQNVEVAAGPAGKCAAVDVEPPSKQKEKAASLKRDMPKVLHDSSKDSITVFVSNLPYSMQEPDTKLRPLFEACGEVVQIRPIFSNRGDFRGYCYVEFKEEKSALQALEMDRKSVEGRPMFVSPCVDKSKNPDFKVFRYSTSLEKHKLFISGLPFSCTKEELEEICKAHGTVKDLRLVTNRAGKPKGLAYVEYENESQASQAVMKMDGMTIKENIIKVAISNPPQRKVPEKPETRKAPGGPMLLPQTYGARGKGRTQLSLLPRALQRPSAAAPQAENGPAAAPAVAAPAATEAPKMSNADFAKLFLRK.

Over residues 1 to 11 the composition is skewed to low complexity; sequence MATAAETSASE. Disordered stretches follow at residues 1 to 36 and 50 to 90; these read MATA…RTRR and TMGP…YDEE. Residue alanine 2 is modified to N-acetylalanine. The tract at residues 2-351 is mediates interaction with PRPF3; the sequence is ATAAETSASE…LVPDLWIRYS (350 aa). Serine 10 and serine 16 each carry phosphoserine. The span at 14–23 shows a compositional bias: basic and acidic residues; the sequence is AESKAGPKAD. The stretch at 21–46 forms a coiled coil; the sequence is KADGEEDEVKAARTRRKVLSRAVAAA. Positions 57 to 69 are enriched in acidic residues; that stretch reads QQEEGVSESDGDE. Residues 82–110 are a coiled coil; the sequence is EYEWEYDEEEEKNQLEIERLEEQLSINVY. 8 HAT repeats span residues 126-158, 164-195, 201-237, 242-275, 324-356, 359-391, 394-430, and 487-520; these read GELT…DEIS, LDRE…YSVG, GGLE…FESA, ARLE…WSED, GDPA…YLDR, KVKD…AMER, VDHQ…YLRR, and NNMQ…LERA. Serine 215 bears the Phosphoserine mark. Residues 487–520 are required for interaction with USP4; that stretch reads NNMQKARELWDSIMTRGNAKYANMWLEYYNLERA. The segment at 537 to 953 is necessary and sufficient for U6 snRNA binding; the sequence is CTSDYPEHVC…AATEAPKMSN (417 aa). Residues 559-619 adopt a coiled-coil conformation; that stretch reads LEDWDIAVQK…ALKKKKKIRG (61 aa). Positions 590-601 are enriched in basic and acidic residues; sequence LVQQEEEKAEQR. The tract at residues 590–694 is disordered; sequence LVQQEEEKAE…AASLKRDMPK (105 aa). The required for nuclear localization stretch occupies residues 600-670; it reads QRKRARAEKK…EVAAGPAGKC (71 aa). A Nuclear localization signal motif is present at residues 601–608; sequence RKRARAEK. The span at 602–617 shows a compositional bias: basic residues; that stretch reads KRARAEKKALKKKKKI. Residues 626 to 639 are compositionally biased toward acidic residues; it reads DEDDEKEWGDDEEE. Residue serine 650 is modified to Phosphoserine. A Phosphothreonine modification is found at threonine 657. Basic and acidic residues predominate over residues 677-694; it reads PPSKQKEKAASLKRDMPK. Residues 704–782 enclose the RRM 1 domain; that stretch reads ITVFVSNLPY…RPMFVSPCVD (79 aa). A phosphoserine mark is found at serine 769, serine 795, and serine 852. Residues 801 to 878 form the RRM 2 domain; sequence HKLFISGLPF…NIIKVAISNP (78 aa). Residues 878-898 are disordered; sequence PPQRKVPEKPETRKAPGGPML. The span at 882-891 shows a compositional bias: basic and acidic residues; it reads KVPEKPETRK. Arginine 906 bears the Omega-N-methylarginine mark. The segment at 920–948 is disordered; the sequence is LQRPSAAAPQAENGPAAAPAVAAPAATEA. Over residues 925–948 the composition is skewed to low complexity; that stretch reads AAAPQAENGPAAAPAVAAPAATEA.

Component of the 7SK snRNP complex at least composed of P-TEFb (composed of CDK9 and CCNT1/cyclin-T1), HEXIM1, HEXIM2, BCDIN3, SART3 proteins and 7SK and U6 snRNAs. Interacts with AGO1 and AGO2. Interacts with PRPF3 and USP4; the interaction with PRPF3 is direct and recruits USP4 to its substrate PRPF3. Interacts with USP15; the interaction is direct. Interacts with HIV-1 Tat. In terms of tissue distribution, ubiquitously expressed.

It localises to the nucleus. Its subcellular location is the nucleoplasm. The protein localises to the cajal body. It is found in the nucleus speckle. The protein resides in the cytoplasm. U6 snRNP-binding protein that functions as a recycling factor of the splicing machinery. Promotes the initial reassembly of U4 and U6 snRNPs following their ejection from the spliceosome during its maturation. Also binds U6atac snRNPs and may function as a recycling factor for U4atac/U6atac spliceosomal snRNP, an initial step in the assembly of U12-type spliceosomal complex. The U12-type spliceosomal complex plays a role in the splicing of introns with non-canonical splice sites. May also function as a substrate-targeting factor for deubiquitinases like USP4 and USP15. Recruits USP4 to ubiquitinated PRPF3 within the U4/U5/U6 tri-snRNP complex, promoting PRPF3 deubiquitination and thereby regulating the spliceosome U4/U5/U6 tri-snRNP spliceosomal complex disassembly. May also recruit the deubiquitinase USP15 to histone H2B and mediate histone deubiquitination, thereby regulating gene expression and/or DNA repair. May play a role in hematopoiesis probably through transcription regulation of specific genes including MYC. Functionally, regulates Tat transactivation activity through direct interaction. May be a cellular factor for HIV-1 gene expression and viral replication. The sequence is that of Spliceosome associated factor 3, U4/U6 recycling protein from Homo sapiens (Human).